The sequence spans 45 residues: Photosystem II reaction center protein K (45 aa).

A propeptide spanning residues 1–8 (MDVNFLLS) is cleaved from the precursor. Residues 20 to 40 (IVDVMPAIPVFFLLLAFVWQA) traverse the membrane as a helical segment.

The protein belongs to the PsbK family. In terms of assembly, PSII is composed of 1 copy each of membrane proteins PsbA, PsbB, PsbC, PsbD, PsbE, PsbF, PsbH, PsbI, PsbJ, PsbK, PsbL, PsbM, PsbT, PsbX, PsbY, PsbZ, Psb30/Ycf12, at least 3 peripheral proteins of the oxygen-evolving complex and a large number of cofactors. It forms dimeric complexes.

The protein localises to the plastid. It localises to the chloroplast thylakoid membrane. Its function is as follows. One of the components of the core complex of photosystem II (PSII). PSII is a light-driven water:plastoquinone oxidoreductase that uses light energy to abstract electrons from H(2)O, generating O(2) and a proton gradient subsequently used for ATP formation. It consists of a core antenna complex that captures photons, and an electron transfer chain that converts photonic excitation into a charge separation. In Emiliania huxleyi (Coccolithophore), this protein is Photosystem II reaction center protein K.